A 360-amino-acid chain; its full sequence is Phosphate acyltransferase (360 aa).

This sequence belongs to the PlsX family. In terms of assembly, homodimer. Probably interacts with PlsY.

It localises to the cytoplasm. It carries out the reaction a fatty acyl-[ACP] + phosphate = an acyl phosphate + holo-[ACP]. Its pathway is lipid metabolism; phospholipid metabolism. Functionally, catalyzes the reversible formation of acyl-phosphate (acyl-PO(4)) from acyl-[acyl-carrier-protein] (acyl-ACP). This enzyme utilizes acyl-ACP as fatty acyl donor, but not acyl-CoA. This is Phosphate acyltransferase from Thermobifida fusca (strain YX).